Reading from the N-terminus, the 494-residue chain is Glutamyl-tRNA(Gln) amidotransferase subunit A, mitochondrial (494 aa).

Catalysis depends on charge relay system residues K79 and S160. The Acyl-ester intermediate role is filled by S184.

It belongs to the amidase family. GatA subfamily. As to quaternary structure, subunit of the heterotrimeric GatCAB amidotransferase (AdT) complex, composed of A, B and C subunits.

Its subcellular location is the mitochondrion. It carries out the reaction L-glutamyl-tRNA(Gln) + L-glutamine + ATP + H2O = L-glutaminyl-tRNA(Gln) + L-glutamate + ADP + phosphate + H(+). Functionally, allows the formation of correctly charged Gln-tRNA(Gln) through the transamidation of misacylated Glu-tRNA(Gln) in the mitochondria. The reaction takes place in the presence of glutamine and ATP through an activated gamma-phospho-Glu-tRNA(Gln). This chain is Glutamyl-tRNA(Gln) amidotransferase subunit A, mitochondrial, found in Aedes aegypti (Yellowfever mosquito).